Reading from the N-terminus, the 578-residue chain is Isocitrate dehydrogenase kinase/phosphatase (578 aa).

ATP is bound by residues 315–321 and Lys-336; that span reads APGIRGM. Residue Asp-371 is part of the active site.

This sequence belongs to the AceK family.

The protein localises to the cytoplasm. The catalysed reaction is L-seryl-[isocitrate dehydrogenase] + ATP = O-phospho-L-seryl-[isocitrate dehydrogenase] + ADP + H(+). Functionally, bifunctional enzyme which can phosphorylate or dephosphorylate isocitrate dehydrogenase (IDH) on a specific serine residue. This is a regulatory mechanism which enables bacteria to bypass the Krebs cycle via the glyoxylate shunt in response to the source of carbon. When bacteria are grown on glucose, IDH is fully active and unphosphorylated, but when grown on acetate or ethanol, the activity of IDH declines drastically concomitant with its phosphorylation. This chain is Isocitrate dehydrogenase kinase/phosphatase, found in Escherichia coli O157:H7.